Reading from the N-terminus, the 68-residue chain is UPF0434 protein BTH_I0741 (68 aa).

The protein belongs to the UPF0434 family.

In Burkholderia thailandensis (strain ATCC 700388 / DSM 13276 / CCUG 48851 / CIP 106301 / E264), this protein is UPF0434 protein BTH_I0741.